A 230-amino-acid polypeptide reads, in one-letter code: Cytidylate kinase (230 aa).

An ATP-binding site is contributed by 12-20; sequence GPSGAGKGT.

Belongs to the cytidylate kinase family. Type 1 subfamily.

It is found in the cytoplasm. It catalyses the reaction CMP + ATP = CDP + ADP. The enzyme catalyses dCMP + ATP = dCDP + ADP. This Shewanella sp. (strain MR-4) protein is Cytidylate kinase.